The sequence spans 82 residues: Large ribosomal subunit protein bL31B (82 aa).

It belongs to the bacterial ribosomal protein bL31 family. Type B subfamily. In terms of assembly, part of the 50S ribosomal subunit.

The sequence is that of Large ribosomal subunit protein bL31B from Proteus mirabilis (strain HI4320).